The sequence spans 449 residues: Protein CapK (449 aa).

Its pathway is capsule biogenesis; capsule polysaccharide biosynthesis. In terms of biological role, required for the biosynthesis of type 1 capsular polysaccharide. The sequence is that of Protein CapK (capK) from Staphylococcus aureus.